Consider the following 396-residue polypeptide: Pyruvate synthase subunit PorA (396 aa).

As to quaternary structure, heterotetramer of one alpha, one beta, one delta and one gamma chain.

It catalyses the reaction 2 oxidized [2Fe-2S]-[ferredoxin] + pyruvate + CoA = 2 reduced [2Fe-2S]-[ferredoxin] + acetyl-CoA + CO2 + H(+). This is Pyruvate synthase subunit PorA (porA) from Pyrococcus furiosus (strain ATCC 43587 / DSM 3638 / JCM 8422 / Vc1).